Consider the following 103-residue polypeptide: Large ribosomal subunit protein bL21 (103 aa).

This sequence belongs to the bacterial ribosomal protein bL21 family. In terms of assembly, part of the 50S ribosomal subunit. Contacts protein L20.

This protein binds to 23S rRNA in the presence of protein L20. The protein is Large ribosomal subunit protein bL21 of Desulforudis audaxviator (strain MP104C).